Here is a 453-residue protein sequence, read N- to C-terminus: MATWYHQKCGLKPLAPVIPRPRTGAALSSTSRVEFLDTNKVVAGPKFQPLRCNLRERNWGLKVSAPLRVASIEEEQKSVDLTNGTNGVEHEKLPEFDPGAPPPFNLADIRAAIPKHCWVKDPWRSMSYVVRDVIAVFGLAAAAAYLNNWLVWPLYWAAQGTMFWALFVLGHDCGHGSFSNNSKLNSVVGHLLHSSILVPYHGWRISHRTHHQHHGHAENDESWHPLPEKLFRSLDTVTRMLRFTAPFPLLAFPVYLFSRSPGKTGSHFDPSSDLFVPNERKDVITSTACWAAMLGLLVGLGFVMGPIQLLKLYGVPYVIFVMWLDLVTYLHHHGHEDKLPWYRGKEWSYLRGGLTTLDRDYGWINNIHHDIGTHVIHHLFPQIPHYHLVEATEAAKPVFGKYYREPKKSAAPLPFHLIGEIIRSFKTDHFVSDTGDVVYYQTDSKINGSSKLE.

Residues 171–175 (HDCGH) carry the Histidine box-1 motif. A Histidine box-2 motif is present at residues 207 to 211 (HRTHH). Residues 374-378 (HVIHH) carry the Histidine box-3 motif.

Belongs to the fatty acid desaturase type 1 family.

Its subcellular location is the plastid. The protein localises to the chloroplast membrane. The protein operates within lipid metabolism; polyunsaturated fatty acid biosynthesis. Its function is as follows. Chloroplast omega-3 fatty acid desaturase introduces the third double bond in the biosynthesis of 16:3 and 18:3 fatty acids, important constituents of plant membranes. It is thought to use ferredoxin as an electron donor and to act on fatty acids esterified to galactolipids, sulfolipids and phosphatidylglycerol. The polypeptide is Omega-3 fatty acid desaturase, chloroplastic (FAD7) (Glycine max (Soybean)).